A 630-amino-acid polypeptide reads, in one-letter code: L-amino-acid oxidase (630 aa).

The signal sequence occupies residues 1-21 (MAGLALRLVLAATLLGLAGSL). A disulfide bridge connects residues Cys-35 and Cys-198. N-linked (GlcNAc...) asparagine glycosylation is present at Asn-53. FAD-binding positions include 68-69 (VA), 88-89 (EA), Arg-96, and 112-115 (GAMR). Substrate is bound at residue Arg-115. 2 N-linked (GlcNAc...) asparagine glycosylation sites follow: Asn-133 and Asn-219. Val-286 contacts FAD. Tyr-395 contributes to the substrate binding site. Residues Glu-479 and 486 to 491 (GWVETA) contribute to the FAD site. 486 to 487 (GW) is a substrate binding site. Residues 532 to 554 (GERPEEQQAREEVSPDEQEPSHK) form a disordered region.

The protein belongs to the flavin monoamine oxidase family. FIG1 subfamily. The cofactor is FAD. Primarily found in immune tissues. In terms of tissue distribution, primarily found in immune tissues, mostly in B-lymphocytes. As to expression, restricted to the testis, predominantly in Sertoli cells at the periphery of the ducts, and the brain, including Purkinje cells, hippocampus and mitral cells in the olfactory bulb. No isoform 2 expression in fetal tissues.

The protein resides in the secreted. The protein localises to the cytoplasmic vesicle. It localises to the secretory vesicle. It is found in the acrosome. Its subcellular location is the lysosome. The catalysed reaction is an L-alpha-amino acid + O2 + H2O = a 2-oxocarboxylate + H2O2 + NH4(+). The enzyme catalyses L-tryptophan + O2 + H2O = indole-3-pyruvate + H2O2 + NH4(+). It carries out the reaction L-phenylalanine + O2 + H2O = 3-phenylpyruvate + H2O2 + NH4(+). It catalyses the reaction L-tyrosine + O2 + H2O = 3-(4-hydroxyphenyl)pyruvate + H2O2 + NH4(+). The catalysed reaction is L-arginine + O2 + H2O = 5-guanidino-2-oxopentanoate + H2O2 + NH4(+). It participates in amino-acid degradation; L-tryptophan degradation via pyruvate pathway. In terms of biological role, secreted L-amino-acid oxidase that acts as a key immunoregulator. Has preference for L-aromatic amino acids: converts phenylalanine (Phe), tyrosine (Tyr) and tryptophan (Trp) to phenylpyruvic acid (PP), hydroxyphenylpyruvic acid (HPP), and indole-3-pyruvic acid (I3P), respectively. Also has weak L-arginine oxidase activity. Acts as a negative regulator of anti-tumor immunity by mediating Trp degradation via an indole pyruvate pathway that activates the transcription factor AHR. IL4I1-mediated Trp catabolism generates I3P, giving rise to indole metabolites (indole-3-acetic acid (IAA) and indole-3-aldehyde (I3A)) and kynurenic acid, which act as ligands for AHR, a ligand-activated transcription factor that plays important roles in immunity and cancer. AHR activation by indoles following IL4I1-mediated Trp degradation enhances tumor progression by promoting cancer cell motility and suppressing adaptive immunity. Also has an immunoregulatory function in some immune cell, probably by mediating Trp degradation and promoting downstream AHR activation: inhibits T-cell activation and proliferation, promotes the differentiation of naive CD4(+) T-cells into FOXP3(+) regulatory T-cells (Treg) and regulates the development and function of B-cells. Also regulates M2 macrophage polarization by inhibiting T-cell activation. Also has antibacterial properties by inhibiting growth of Gram negative and Gram positive bacteria through the production of NH4(+) and H2O2. The sequence is that of L-amino-acid oxidase from Mus musculus (Mouse).